The sequence spans 823 residues: DNA ligase (823 aa).

NAD(+) is bound by residues 31–35 (DDAFD) and 73–74 (SQ). K100 serves as the catalytic N6-AMP-lysine intermediate. NAD(+) is bound by residues R121, E163, K275, and K296. C387, C390, C403, and C408 together coordinate Zn(2+). BRCT domains follow at residues 562–655 (QAES…TGET), 654–742 (ETVH…DAHV), and 741–823 (HVHA…TPGT).

The protein belongs to the NAD-dependent DNA ligase family. LigA subfamily. The cofactor is Mg(2+). Mn(2+) serves as cofactor.

The enzyme catalyses NAD(+) + (deoxyribonucleotide)n-3'-hydroxyl + 5'-phospho-(deoxyribonucleotide)m = (deoxyribonucleotide)n+m + AMP + beta-nicotinamide D-nucleotide.. Functionally, DNA ligase that catalyzes the formation of phosphodiester linkages between 5'-phosphoryl and 3'-hydroxyl groups in double-stranded DNA using NAD as a coenzyme and as the energy source for the reaction. It is essential for DNA replication and repair of damaged DNA. The chain is DNA ligase from Treponema pallidum (strain Nichols).